A 252-amino-acid polypeptide reads, in one-letter code: Ribonuclease HII (252 aa).

Residues 68-252 form the RNase H type-2 domain; it reads EYVAGLDEVG…FGPVRDRLRS (185 aa). 3 residues coordinate a divalent metal cation: Asp-74, Glu-75, and Asp-165.

The protein belongs to the RNase HII family. Mn(2+) serves as cofactor. It depends on Mg(2+) as a cofactor.

Its subcellular location is the cytoplasm. The enzyme catalyses Endonucleolytic cleavage to 5'-phosphomonoester.. Its function is as follows. Endonuclease that specifically degrades the RNA of RNA-DNA hybrids. This Lacticaseibacillus paracasei (strain ATCC 334 / BCRC 17002 / CCUG 31169 / CIP 107868 / KCTC 3260 / NRRL B-441) (Lactobacillus paracasei) protein is Ribonuclease HII.